The following is a 311-amino-acid chain: MLSRIVSNNATRSVMCHQAQVGILYKTNPVRTYATLKEVEMRLKSIKNIEKITKTMKIVASTRLSKAEKAKISAKKMDEAEQLFYKNAETKNLDVEATETGAPKELIVAITSDKGLCGSIHSQLAKAVRRHLNDQPNADIVTIGDKIKMQLLRTHPNNIKLSINGIGKDAPTFQESALIADKLLSVMKAGTYPKISIFYNDPVSSLSFEPSEKPIFNAKTIEQSPSFGKFEIDTDANVPRDLFEYTLANQMLTAMAQGYAAEISARRNAMDNASKNAGDMINRYSILYNRTRQAVITNELVDIITGASSLG.

Residues 1 to 33 constitute a mitochondrion transit peptide; sequence MLSRIVSNNATRSVMCHQAQVGILYKTNPVRTY.

It belongs to the ATPase gamma chain family. In terms of assembly, F-type ATPases have 2 components, CF(1) - the catalytic core - and CF(0) - the membrane proton channel. CF(1) has five subunits: alpha(3), beta(3), gamma(1), delta(1), epsilon(1). CF(0) has three main subunits: a, b and c.

It localises to the mitochondrion. The protein resides in the mitochondrion inner membrane. Its function is as follows. Mitochondrial membrane ATP synthase (F(1)F(0) ATP synthase or Complex V) produces ATP from ADP in the presence of a proton gradient across the membrane which is generated by electron transport complexes of the respiratory chain. F-type ATPases consist of two structural domains, F(1) - containing the extramembraneous catalytic core, and F(0) - containing the membrane proton channel, linked together by a central stalk and a peripheral stalk. During catalysis, ATP synthesis in the catalytic domain of F(1) is coupled via a rotary mechanism of the central stalk subunits to proton translocation. Part of the complex F(1) domain and the central stalk which is part of the complex rotary element. The gamma subunit protrudes into the catalytic domain formed of alpha(3)beta(3). Rotation of the central stalk against the surrounding alpha(3)beta(3) subunits leads to hydrolysis of ATP in three separate catalytic sites on the beta subunits. The polypeptide is ATP synthase subunit gamma, mitochondrial (ATP3) (Saccharomyces cerevisiae (strain ATCC 204508 / S288c) (Baker's yeast)).